The primary structure comprises 207 residues: Alpha-1-acid glycoprotein 2 (207 aa).

The signal sequence occupies residues 1 to 18 (MALHMILVMVSLLPLLEA). At Gln-19 the chain carries Pyrrolidone carboxylic acid. Residues Asn-25, Asn-34, Asn-76, Asn-94, and Asn-104 are each glycosylated (N-linked (GlcNAc...) asparagine). Residues Cys-91 and Cys-184 are joined by a disulfide bond. Positions 188 to 207 (EKQQLELEKETKKDPEEGQA) are disordered.

This sequence belongs to the calycin superfamily. Lipocalin family. As to expression, expressed by the liver and secreted in plasma.

The protein localises to the secreted. Functions as a transport protein in the blood stream. Binds various ligands in the interior of its beta-barrel domain. Appears to function in modulating the activity of the immune system during the acute-phase reaction. The sequence is that of Alpha-1-acid glycoprotein 2 (Orm2) from Mus musculus (Mouse).